Here is a 545-residue protein sequence, read N- to C-terminus: CTP synthase (545 aa).

The interval 1 to 266 (MTTNYIFVTG…DDYICKRFSL (266 aa)) is amidoligase domain. Position 14 (S14) interacts with CTP. A UTP-binding site is contributed by S14. ATP is bound by residues 15-20 (SLGKGI) and D72. Residues D72 and E140 each contribute to the Mg(2+) site. CTP contacts are provided by residues 147-149 (DIE), 187-192 (KTKPTQ), and K223. Residues 187-192 (KTKPTQ) and K223 contribute to the UTP site. 239-241 (KDV) serves as a coordination point for ATP. A Glutamine amidotransferase type-1 domain is found at 291–542 (TIGMVGKYIE…VKAASEHQKR (252 aa)). G352 is a binding site for L-glutamine. C379 acts as the Nucleophile; for glutamine hydrolysis in catalysis. L-glutamine is bound by residues 380-383 (LGMQ), E403, and R470. Residues H515 and E517 contribute to the active site.

This sequence belongs to the CTP synthase family. As to quaternary structure, homotetramer.

The enzyme catalyses UTP + L-glutamine + ATP + H2O = CTP + L-glutamate + ADP + phosphate + 2 H(+). It catalyses the reaction L-glutamine + H2O = L-glutamate + NH4(+). The catalysed reaction is UTP + NH4(+) + ATP = CTP + ADP + phosphate + 2 H(+). Its pathway is pyrimidine metabolism; CTP biosynthesis via de novo pathway; CTP from UDP: step 2/2. Its activity is regulated as follows. Allosterically activated by GTP, when glutamine is the substrate; GTP has no effect on the reaction when ammonia is the substrate. The allosteric effector GTP functions by stabilizing the protein conformation that binds the tetrahedral intermediate(s) formed during glutamine hydrolysis. Inhibited by the product CTP, via allosteric rather than competitive inhibition. Catalyzes the ATP-dependent amination of UTP to CTP with either L-glutamine or ammonia as the source of nitrogen. Regulates intracellular CTP levels through interactions with the four ribonucleotide triphosphates. This chain is CTP synthase, found in Salmonella schwarzengrund (strain CVM19633).